Reading from the N-terminus, the 261-residue chain is Carbonic anhydrase 1 (261 aa).

Positions 1-40 (MASPDWGYDDKNGPEQWSKLYPIANGNNQSPVDIKTSETK) are disordered. Alanine 2 carries the N-acetylalanine modification. The region spanning 4–261 (PDWGYDDKNG…LKGRTVRASF (258 aa)) is the Alpha-carbonic anhydrase domain. The active-site Proton donor/acceptor is the histidine 65. Residues histidine 95, histidine 97, and histidine 120 each contribute to the Zn(2+) site. Residues threonine 200 and 200-201 (TH) contribute to the substrate site. The interval 241–261 (PMQHNNRPTQPLKGRTVRASF) is disordered.

Belongs to the alpha-carbonic anhydrase family. The cofactor is Zn(2+).

The protein localises to the cytoplasm. It catalyses the reaction hydrogencarbonate + H(+) = CO2 + H2O. The enzyme catalyses urea = cyanamide + H2O. With respect to regulation, inhibited by acetazolamide. Catalyzes the reversible hydration of carbon dioxide. Can hydrate cyanamide to urea. The sequence is that of Carbonic anhydrase 1 (CA1) from Pan troglodytes (Chimpanzee).